The primary structure comprises 85 residues: UPF0473 protein CLK_1946 (85 aa).

It belongs to the UPF0473 family.

The polypeptide is UPF0473 protein CLK_1946 (Clostridium botulinum (strain Loch Maree / Type A3)).